The following is a 229-amino-acid chain: Secretory carrier-associated membrane protein 4 (229 aa).

At 1–39 (MSEKENNFPPLPKFIPVKPCFYQNFSDEIPVEHQVLVKR) the chain is on the cytoplasmic side. The next 4 helical transmembrane spans lie at 40 to 60 (IYRL…ACLA), 61 to 81 (WWIG…LLLF), 105 to 125 (FMAF…QAIG), and 149 to 169 (VVML…AIAI). Residues 170-229 (MKVHRIYRGAGGSFQKAQTEWNTGTWRNPPSREAQYNNFSGNSLPEYPTVPSYPGSGQWP) are Cytoplasmic-facing. Threonine 194 carries the post-translational modification Phosphothreonine. Residues 208-229 (FSGNSLPEYPTVPSYPGSGQWP) are disordered.

This sequence belongs to the SCAMP family.

Its subcellular location is the membrane. Probably involved in membrane protein trafficking. The sequence is that of Secretory carrier-associated membrane protein 4 (SCAMP4) from Homo sapiens (Human).